Here is a 722-residue protein sequence, read N- to C-terminus: Pesticidal crystal protein Cry22Aa (722 aa).

In terms of biological role, promotes colloidosmotic lysis by binding to the midgut epithelial cells of hymenopteran species. This chain is Pesticidal crystal protein Cry22Aa (cry22Aa), found in Bacillus thuringiensis.